The primary structure comprises 421 residues: ATP-dependent RNA helicase RhlB (421 aa).

The Q motif motif lies at 9–37 (QKFSDFALHPKVVEALEKKGFHNCTPIQA). The region spanning 40–219 (LPLTLAGRDV…FEQMNNAEYI (180 aa)) is the Helicase ATP-binding domain. 53–60 (AQTGTGKT) provides a ligand contact to ATP. A DEAD box motif is present at residues 165–168 (DEAD). The region spanning 245–390 (RLLQTLIEEE…VSKYNPDALM (146 aa)) is the Helicase C-terminal domain. Residues 392 to 421 (DLPKPLRLTRPRTGNGPRRTGTPRNRRRSG) are disordered. The span at 402 to 414 (PRTGNGPRRTGTP) shows a compositional bias: low complexity.

It belongs to the DEAD box helicase family. RhlB subfamily. Component of the RNA degradosome, which is a multiprotein complex involved in RNA processing and mRNA degradation.

The protein resides in the cytoplasm. The enzyme catalyses ATP + H2O = ADP + phosphate + H(+). Functionally, DEAD-box RNA helicase involved in RNA degradation. Has RNA-dependent ATPase activity and unwinds double-stranded RNA. In Escherichia coli O17:K52:H18 (strain UMN026 / ExPEC), this protein is ATP-dependent RNA helicase RhlB.